Consider the following 98-residue polypeptide: uncharacterized protein (98 aa).

2 consecutive transmembrane segments (helical) span residues 8-28 (LILK…HYFL) and 73-93 (LWFI…SISL).

The protein resides in the membrane. This is an uncharacterized protein from Saccharomyces cerevisiae (strain ATCC 204508 / S288c) (Baker's yeast).